We begin with the raw amino-acid sequence, 280 residues long: B3 domain-containing protein At5g25470 (280 aa).

The TF-B3 1 DNA-binding region spans 20 to 114; that stretch reads WKSLSPGQNW…FLEVQIFKND (95 aa). The disordered stretch occupies residues 122-153; the sequence is PPEVEPETEPFHPTTPKNSHKETTTASASASA. The segment at residues 183-276 is a DNA-binding region (TF-B3 2); it reads YFVKTLTKGN…ELVTAVRVHF (94 aa).

It localises to the nucleus. The protein is B3 domain-containing protein At5g25470 of Arabidopsis thaliana (Mouse-ear cress).